A 438-amino-acid polypeptide reads, in one-letter code: uncharacterized protein (438 aa).

Positions 1–20 are cleaved as a signal peptide; it reads MNTRLALVLCAVGSGVLSFS. Residue Cys21 is the site of N-palmitoyl cysteine attachment. A lipid anchor (S-diacylglycerol cysteine) is attached at Cys21.

Its subcellular location is the cell membrane. This is an uncharacterized protein from Treponema pallidum (strain Nichols).